We begin with the raw amino-acid sequence, 266 residues long: Zinc finger protein SNAI2 (266 aa).

The tract at residues 1-20 (MPRSFLVKKHFNSAKKPNYG) is SNAG domain. Positions 75-115 (SGYPSSLGRVSPPPQSDTSSKDHSGSESPISDEEERLQTKL) are disordered. 4 consecutive C2H2-type zinc fingers follow at residues 126–148 (FQCS…KQLH), 157–179 (FSCK…IRTH), 183–205 (CVCK…IRTH), and 211–233 (FSCP…LQTH). Residues 239-262 (YQCKNCSKTFSRMSLLHKHEESGC) form a C2H2-type 5; atypical zinc finger.

Belongs to the snail C2H2-type zinc-finger protein family. Interacts (via SNAG domain) with limd1 (via LIM domains), wtip (via LIM domains) and ajuba (via LIM domains). Interacts with elp3. As to expression, first expressed on the lateral side of stage 12 embryos. At stage 14, strongly expressed in the lateral neural folds. At stage 16, expressed in pre-migratory neural crest cells. At stage 18, expression is dispersed over the neural plate in a pattern surrounding the rhombomeres. At stage 22, expressed in neural crest derivatives, including the branchial arches and the tissues surrounding the eyes and forebrain. After stage 17, expression is weak in the lateral plate mesoderm, increasing at stage 26, but was down-regulated in the pronephros region at stage 26.

The protein resides in the nucleus. In terms of biological role, probable transcriptional repressor. Acts downstream of snai1 in the specification of the neural crest and neural crest migration. This is Zinc finger protein SNAI2 (snai2) from Xenopus laevis (African clawed frog).